Consider the following 88-residue polypeptide: Small ribosomal subunit protein bS18B (88 aa).

This sequence belongs to the bacterial ribosomal protein bS18 family. Part of the 30S ribosomal subunit. Forms a tight heterodimer with protein bS6.

Its function is as follows. Binds as a heterodimer with protein bS6 to the central domain of the 16S rRNA, where it helps stabilize the platform of the 30S subunit. This chain is Small ribosomal subunit protein bS18B, found in Roseiflexus castenholzii (strain DSM 13941 / HLO8).